The sequence spans 488 residues: Palmitoleoyl-protein carboxylesterase notum1' (488 aa).

Residues 1–19 (MAGTLCVTLLLLLSTIAVG) form the signal peptide. N90 carries N-linked (GlcNAc...) asparagine glycosylation. Catalysis depends on charge relay system residues S226, D334, and H383.

It belongs to the pectinacetylesterase family. Notum subfamily. Expressed in the egg and through cleavage to gastrulation stages. Enriched in the animal (prospective ectoderm) and dorsal regions in early gastrula. Shows a dynamic expression during embryogenesis, in particular during neural induction and antero-posterior (AP) patterning.

The protein resides in the secreted. The catalysed reaction is [Wnt protein]-O-(9Z)-hexadecenoyl-L-serine + H2O = [Wnt protein]-L-serine + (9Z)-hexadecenoate + H(+). Carboxylesterase that acts as a key negative regulator of the Wnt signaling pathway by specifically mediating depalmitoleoylation of WNT proteins. Serine palmitoleoylation of WNT proteins is required for efficient binding to frizzled receptors. Functions in the prospective ectoderm and is required for neural induction. The protein is Palmitoleoyl-protein carboxylesterase notum1' of Xenopus laevis (African clawed frog).